The sequence spans 337 residues: MKRIAVLTSGGDAPGMNAAIRAVVRKAISEGMEVYGINRGYAGMVDGDIFPLGSKEVGDKISRGGTFLYSARYPEFAQLEGQLAGIEQLKKHGIEGVVVIGGDGSYHGAMRLTEHGFPAVGIPGTIDNDIAGTDYTIGFDTAVNTAVEAIDKLRDTSSSHGRTFVVEVMGRNAGDIALWAGIASGADQIIVPEEEFDIEKVASTIQYDFEHKGKNHHIIVLAEGVMSGEAFAQKLKEAGDKSDLRVTNLGHILRGGSPTARDRVIASWMGSHAVELLKEGKGGLAVGIHNEELVESPILGTAEEGALFSLTEEGQIIVNNPHKARLDFAALNRSLSQ.

Residue Gly11 coordinates ATP. Arg21–Arg25 is a binding site for ADP. Residues Arg72–Tyr73 and Gly102–Ser105 contribute to the ATP site. Residue Asp103 coordinates Mg(2+). Position 125 to 127 (Thr125 to Asp127) interacts with substrate. Asp127 (proton acceptor) is an active-site residue. Arg154 is an ADP binding site. Residues Arg162 and Met169–Arg171 contribute to the substrate site. ADP contacts are provided by residues Gly185–Asp187, Lys212, and Lys214–His216. Residues Glu223, Arg245, and His251–Arg254 each bind substrate.

The protein belongs to the phosphofructokinase type A (PFKA) family. ATP-dependent PFK group I subfamily. Prokaryotic clade 'B1' sub-subfamily. Homotetramer. Requires Mg(2+) as cofactor.

It is found in the cytoplasm. It carries out the reaction beta-D-fructose 6-phosphate + ATP = beta-D-fructose 1,6-bisphosphate + ADP + H(+). Its pathway is carbohydrate degradation; glycolysis; D-glyceraldehyde 3-phosphate and glycerone phosphate from D-glucose: step 3/4. Its activity is regulated as follows. Allosterically activated by ADP and other diphosphonucleosides, and allosterically inhibited by phosphoenolpyruvate. In terms of biological role, catalyzes the phosphorylation of D-fructose 6-phosphate to fructose 1,6-bisphosphate by ATP, the first committing step of glycolysis. The polypeptide is ATP-dependent 6-phosphofructokinase (Streptococcus pyogenes serotype M3 (strain SSI-1)).